A 301-amino-acid chain; its full sequence is Probable alpha-L-glutamate ligase 1 (301 aa).

Residues 104 to 287 enclose the ATP-grasp domain; it reads LQLLSRKNIG…VAEKIIQFIE (184 aa). ATP is bound by residues K141, 178 to 179, D187, and 211 to 213; these read EY and RSN. Mg(2+) is bound by residues D248, E260, and N262. 3 residues coordinate Mn(2+): D248, E260, and N262.

Belongs to the RimK family. The cofactor is Mg(2+). Mn(2+) serves as cofactor.

The sequence is that of Probable alpha-L-glutamate ligase 1 from Shewanella frigidimarina (strain NCIMB 400).